The primary structure comprises 465 residues: Putrescine aminotransferase (465 aa).

Pyridoxal 5'-phosphate contacts are provided by residues Gly-150–Thr-151 and Gln-274. Lys-300 bears the N6-(pyridoxal phosphate)lysine mark. Thr-332 is a pyridoxal 5'-phosphate binding site.

The protein belongs to the class-III pyridoxal-phosphate-dependent aminotransferase family. Putrescine aminotransferase subfamily. It depends on pyridoxal 5'-phosphate as a cofactor.

It carries out the reaction an alkane-alpha,omega-diamine + 2-oxoglutarate = an omega-aminoaldehyde + L-glutamate. The catalysed reaction is putrescine + 2-oxoglutarate = 1-pyrroline + L-glutamate + H2O. The enzyme catalyses cadaverine + 2-oxoglutarate = 5-aminopentanal + L-glutamate. The protein operates within amine and polyamine degradation; putrescine degradation; 4-aminobutanal from putrescine (transaminase route): step 1/1. In terms of biological role, catalyzes the aminotransferase reaction from putrescine to 2-oxoglutarate, leading to glutamate and 4-aminobutanal, which spontaneously cyclizes to form 1-pyrroline. This is the first step in one of two pathways for putrescine degradation, where putrescine is converted into 4-aminobutanoate (gamma-aminobutyrate or GABA) via 4-aminobutanal. Also functions as a cadaverine transaminase in a a L-lysine degradation pathway to succinate that proceeds via cadaverine, glutarate and L-2-hydroxyglutarate. This Cronobacter sakazakii (strain ATCC BAA-894) (Enterobacter sakazakii) protein is Putrescine aminotransferase.